The primary structure comprises 369 residues: 4-hydroxy-3-methylbut-2-en-1-yl diphosphate synthase (flavodoxin) (369 aa).

The [4Fe-4S] cluster site is built by cysteine 270, cysteine 273, cysteine 305, and glutamate 312.

The protein belongs to the IspG family. Requires [4Fe-4S] cluster as cofactor.

It catalyses the reaction (2E)-4-hydroxy-3-methylbut-2-enyl diphosphate + oxidized [flavodoxin] + H2O + 2 H(+) = 2-C-methyl-D-erythritol 2,4-cyclic diphosphate + reduced [flavodoxin]. Its pathway is isoprenoid biosynthesis; isopentenyl diphosphate biosynthesis via DXP pathway; isopentenyl diphosphate from 1-deoxy-D-xylulose 5-phosphate: step 5/6. Its function is as follows. Converts 2C-methyl-D-erythritol 2,4-cyclodiphosphate (ME-2,4cPP) into 1-hydroxy-2-methyl-2-(E)-butenyl 4-diphosphate. The sequence is that of 4-hydroxy-3-methylbut-2-en-1-yl diphosphate synthase (flavodoxin) from Pseudomonas entomophila (strain L48).